The following is a 255-amino-acid chain: 3-deoxy-manno-octulosonate cytidylyltransferase (255 aa).

Belongs to the KdsB family.

It is found in the cytoplasm. The enzyme catalyses 3-deoxy-alpha-D-manno-oct-2-ulosonate + CTP = CMP-3-deoxy-beta-D-manno-octulosonate + diphosphate. Its pathway is nucleotide-sugar biosynthesis; CMP-3-deoxy-D-manno-octulosonate biosynthesis; CMP-3-deoxy-D-manno-octulosonate from 3-deoxy-D-manno-octulosonate and CTP: step 1/1. It participates in bacterial outer membrane biogenesis; lipopolysaccharide biosynthesis. Its function is as follows. Activates KDO (a required 8-carbon sugar) for incorporation into bacterial lipopolysaccharide in Gram-negative bacteria. In Polaromonas sp. (strain JS666 / ATCC BAA-500), this protein is 3-deoxy-manno-octulosonate cytidylyltransferase.